Reading from the N-terminus, the 194-residue chain is Dephospho-CoA kinase (194 aa).

Residues 4–194 (VIGLTGSIGM…VKEILQKLGA (191 aa)) enclose the DPCK domain. Position 12–17 (12–17 (GMGKTT)) interacts with ATP.

The protein belongs to the CoaE family.

Its subcellular location is the cytoplasm. The catalysed reaction is 3'-dephospho-CoA + ATP = ADP + CoA + H(+). It participates in cofactor biosynthesis; coenzyme A biosynthesis; CoA from (R)-pantothenate: step 5/5. Functionally, catalyzes the phosphorylation of the 3'-hydroxyl group of dephosphocoenzyme A to form coenzyme A. The sequence is that of Dephospho-CoA kinase from Agrobacterium fabrum (strain C58 / ATCC 33970) (Agrobacterium tumefaciens (strain C58)).